We begin with the raw amino-acid sequence, 111 residues long: Ig kappa chain V-III region PC 2485/PC 4039 (111 aa).

The tract at residues 1–23 (DIVLTQSPASLAVSLGQRATISC) is framework-1. Residues Cys23 and Cys92 are joined by a disulfide bond. A complementarity-determining-1 region spans residues 24 to 38 (RASKSVSTSGYSYMH). The tract at residues 39–53 (WYQQKPGQPPKLLIY) is framework-2. The tract at residues 54–60 (LASSLES) is complementarity-determining-2. Residues 61 to 92 (GVPARFSGSGSGTDFTLNIQPVEEEDAAIYYC) form a framework-3 region. The complementarity-determining-3 stretch occupies residues 93–101 (QHSRELPLT). A framework-4 region spans residues 102 to 111 (FGAGTKLELK).

The chain is Ig kappa chain V-III region PC 2485/PC 4039 from Mus musculus (Mouse).